The following is a 275-amino-acid chain: Sulfate transporter CysZ (275 aa).

The segment at 1–24 (MSSEKSSFPEKPPSFEKPSHSNTA) is disordered. Positions 13-24 (PSFEKPSHSNTA) are enriched in basic and acidic residues. A run of 4 helical transmembrane segments spans residues 49–69 (FVIL…WWLF), 93–113 (LIWP…FSTI), 169–189 (IVLL…PVLW), and 232–252 (ALVS…PVAV).

This sequence belongs to the CysZ family.

It localises to the cell inner membrane. High affinity, high specificity proton-dependent sulfate transporter, which mediates sulfate uptake. Provides the sulfur source for the cysteine synthesis pathway. The polypeptide is Sulfate transporter CysZ (Pectobacterium atrosepticum (strain SCRI 1043 / ATCC BAA-672) (Erwinia carotovora subsp. atroseptica)).